Reading from the N-terminus, the 393-residue chain is Heparan sulfate glucosamine 3-O-sulfotransferase 3A1 (393 aa).

Topologically, residues 1–24 (MAPSGPTGAQPSPAEPLSRSIFRK) are cytoplasmic. Residues 25 to 43 (FLLMLCSLLTSLYVFYCLA) form a helical; Signal-anchor for type II membrane protein membrane-spanning segment. Over 44 to 393 (ERCPPGSGPV…MTGRDFGWDG (350 aa)) the chain is Lumenal. Residues 85–121 (QRRRRGRSGPGDSSDQEEQSPGLAAAPGGSGAGSSVA) are disordered. 149–153 (KGGTR) lines the 3'-phosphoadenylyl sulfate pocket. Residues 171–177 (EPHFFDR) and 202–205 (KTPS) contribute to the substrate site. The 3'-phosphoadenylyl sulfate site is built by Arg230 and Ser238. A glycan (N-linked (GlcNAc...) asparagine) is linked at Asn260. A substrate-binding site is contributed by 270-271 (WS). N-linked (GlcNAc...) asparagine glycosylation is present at Asn331. Residues Cys338 and Cys350 are joined by a disulfide bond. 355-359 (KGRAH) provides a ligand contact to 3'-phosphoadenylyl sulfate.

The protein belongs to the sulfotransferase 1 family.

Its subcellular location is the golgi apparatus membrane. The catalysed reaction is alpha-D-glucosaminyl-[heparan sulfate](n) + 3'-phosphoadenylyl sulfate = 3-sulfo-alpha-D-glucosaminyl-[heparan sulfate](n) + adenosine 3',5'-bisphosphate + H(+). Its function is as follows. Sulfotransferase that utilizes 3'-phospho-5'-adenylyl sulfate (PAPS) to catalyze the transfer of a sulfo group to an N-unsubstituted glucosamine linked to a 2-O-sulfo iduronic acid unit on heparan sulfate. Catalyzes the O-sulfation of glucosamine in IdoUA2S-GlcNS and also in IdoUA2S-GlcNH2. Unlike HS3ST1/3-OST-1, does not convert non-anticoagulant heparan sulfate to anticoagulant heparan sulfate. This Mus musculus (Mouse) protein is Heparan sulfate glucosamine 3-O-sulfotransferase 3A1 (Hs3st3a1).